Reading from the N-terminus, the 158-residue chain is SH3 domain-binding glutamic acid-rich protein homolog (158 aa).

A compositionally biased stretch (basic and acidic residues) spans 40–51 (TEPGKESEKELM). Residues 40 to 74 (TEPGKESEKELMQNKSTSNGGTVSDPEPRHPLPPQ) are disordered. Positions 52-61 (QNKSTSNGGT) are enriched in polar residues. Positions 67–73 (PRHPLPP) match the SH3-binding motif. Residue Thr109 is modified to Phosphothreonine. Positions 118-158 (LKQENGDAKKEEAETEAEDKKTEAGDGDVDVKEEAAEKAEV) are disordered.

Belongs to the SH3BGR family.

The polypeptide is SH3 domain-binding glutamic acid-rich protein homolog (Sh3beta) (Drosophila melanogaster (Fruit fly)).